The sequence spans 428 residues: Metal tolerance protein 10 (428 aa).

At 1 to 140 the chain is on the cytoplasmic side; it reads MPLNSYIFFL…EMKKLAKSER (140 aa). The chain crosses the membrane as a helical span at residues 141 to 161; that stretch reads LAVHISNATNLVLFVAKVYAS. Residues 162–167 lie on the Vacuolar side of the membrane; the sequence is MESRSM. Residues 168–188 traverse the membrane as a helical segment; the sequence is AVIASTLDSLLDLLSGFILWF. Residues 189–209 lie on the Cytoplasmic side of the membrane; the sequence is TANAMRKPNQFHYPIGKRRMQ. The chain crosses the membrane as a helical span at residues 210 to 230; sequence PVGIIVFASVMATLGLQVLLE. Over 231 to 248 the chain is Vacuolar; it reads SGRQLVAKSGIHMNSTEE. A helical transmembrane segment spans residues 249–269; that stretch reads KWMIGIMVSVTIVKFLLMLYC. Residues 270 to 287 are Cytoplasmic-facing; that stretch reads RGFQNEIVRAYAQDHLFD. Residues 288–308 form a helical membrane-spanning segment; it reads VVTNSIGLATAVLAVKFYWWI. Residues 309-311 lie on the Vacuolar side of the membrane; sequence DPT. A helical membrane pass occupies residues 312–332; sequence GAILIALYTIATWARTVLENV. The Cytoplasmic portion of the chain corresponds to 333-428; the sequence is HSLIGRSAPP…FTHRPEHKCN (96 aa).

The protein belongs to the cation diffusion facilitator (CDF) transporter (TC 2.A.4) family. SLC30A subfamily.

It localises to the vacuole membrane. Its function is as follows. Involved in sequestration of excess metal in the cytoplasm into vacuoles to maintain metal homeostasis. In Arabidopsis thaliana (Mouse-ear cress), this protein is Metal tolerance protein 10 (MTP10).